The chain runs to 1412 residues: DNA-directed RNA polymerase subunit beta'' (1412 aa).

4 residues coordinate Zn(2+): Cys-220, Cys-294, Cys-301, and Cys-304.

The protein belongs to the RNA polymerase beta' chain family. RpoC2 subfamily. In terms of assembly, in plastids the minimal PEP RNA polymerase catalytic core is composed of four subunits: alpha, beta, beta', and beta''. When a (nuclear-encoded) sigma factor is associated with the core the holoenzyme is formed, which can initiate transcription. Requires Zn(2+) as cofactor.

Its subcellular location is the plastid. It is found in the chloroplast. It catalyses the reaction RNA(n) + a ribonucleoside 5'-triphosphate = RNA(n+1) + diphosphate. In terms of biological role, DNA-dependent RNA polymerase catalyzes the transcription of DNA into RNA using the four ribonucleoside triphosphates as substrates. The protein is DNA-directed RNA polymerase subunit beta'' of Chara vulgaris (Common stonewort).